The following is a 280-amino-acid chain: Urease accessory protein UreD (280 aa).

The protein belongs to the UreD family. As to quaternary structure, ureD, UreF and UreG form a complex that acts as a GTP-hydrolysis-dependent molecular chaperone, activating the urease apoprotein by helping to assemble the nickel containing metallocenter of UreC. The UreE protein probably delivers the nickel.

The protein resides in the cytoplasm. Functionally, required for maturation of urease via the functional incorporation of the urease nickel metallocenter. The protein is Urease accessory protein UreD of Staphylococcus saprophyticus subsp. saprophyticus (strain ATCC 15305 / DSM 20229 / NCIMB 8711 / NCTC 7292 / S-41).